The chain runs to 76 residues: Exodeoxyribonuclease 7 small subunit (76 aa).

This sequence belongs to the XseB family. In terms of assembly, heterooligomer composed of large and small subunits.

The protein resides in the cytoplasm. It catalyses the reaction Exonucleolytic cleavage in either 5'- to 3'- or 3'- to 5'-direction to yield nucleoside 5'-phosphates.. Its function is as follows. Bidirectionally degrades single-stranded DNA into large acid-insoluble oligonucleotides, which are then degraded further into small acid-soluble oligonucleotides. The chain is Exodeoxyribonuclease 7 small subunit from Bacillus cereus (strain ATCC 14579 / DSM 31 / CCUG 7414 / JCM 2152 / NBRC 15305 / NCIMB 9373 / NCTC 2599 / NRRL B-3711).